The following is a 261-amino-acid chain: Pyridoxine-5'-phosphate oxidase (261 aa).

Residue 42–45 (RGDR) participates in pyridoxal 5'-phosphate binding. Residue 95 to 98 (RMLL) participates in FMN binding. K100 serves as a coordination point for pyridoxal 5'-phosphate. FMN-binding positions include 110–111 (FT), 116–117 (RK), and Q139. Pyridoxal 5'-phosphate-binding residues include Y157, R161, and S165. FMN contacts are provided by residues 174-175 (QS) and W219. Position 225–227 (225–227 (RLH)) interacts with pyridoxal 5'-phosphate. R229 contacts FMN. T238 is modified (phosphothreonine). The residue at position 241 (S241) is a Phosphoserine.

This sequence belongs to the pyridoxamine 5'-phosphate oxidase family. In terms of assembly, homodimer. Requires FMN as cofactor. As to expression, detected in adult liver.

It catalyses the reaction pyridoxamine 5'-phosphate + O2 + H2O = pyridoxal 5'-phosphate + H2O2 + NH4(+). The enzyme catalyses pyridoxine 5'-phosphate + O2 = pyridoxal 5'-phosphate + H2O2. Its pathway is cofactor metabolism; pyridoxal 5'-phosphate salvage; pyridoxal 5'-phosphate from pyridoxamine 5'-phosphate: step 1/1. It functions in the pathway cofactor metabolism; pyridoxal 5'-phosphate salvage; pyridoxal 5'-phosphate from pyridoxine 5'-phosphate: step 1/1. In terms of biological role, catalyzes the oxidation of either pyridoxine 5'-phosphate (PNP) or pyridoxamine 5'-phosphate (PMP) into pyridoxal 5'-phosphate (PLP). The sequence is that of Pyridoxine-5'-phosphate oxidase (Pnpo) from Rattus norvegicus (Rat).